Consider the following 194-residue polypeptide: Early growth response protein 1 (194 aa).

3 consecutive C2H2-type zinc fingers follow at residues 1–18, 24–46, and 52–74; these read CDRRFSRSDELTRHIRIH, FQCRICMRNFSRSDHLTTHIRTH, and FACDICGRKFARSDERKRHTKIH. The disordered stretch occupies residues 66–88; that stretch reads ERKRHTKIHLRQKDKKVEKAASV. The segment covering 69–79 has biased composition (basic residues); that stretch reads RHTKIHLRQKD.

It belongs to the EGR C2H2-type zinc-finger protein family.

The protein localises to the nucleus. It localises to the cytoplasm. In terms of biological role, transcriptional regulator. Recognizes and binds to the DNA sequence 5'-GCG(T/G)GGGCG-3'(EGR-site) in the promoter region of target genes. Binds double-stranded target DNA, irrespective of the cytosine methylation status. Regulates the transcription of numerous target genes, and thereby plays an important role in regulating the response to growth factors, DNA damage, and ischemia. Plays a role in the regulation of cell survival, proliferation and cell death. Mediates responses to ischemia and hypoxia; regulates the expression of proteins that are involved in inflammatory processes. Plays a role in regulating the expression of circadian clock genes. The protein is Early growth response protein 1 (EGR1) of Coturnix japonica (Japanese quail).